A 218-amino-acid chain; its full sequence is Pyridoxine/pyridoxamine 5'-phosphate oxidase (218 aa).

Substrate-binding positions include 14–17 and Lys72; that span reads RREY. Residues 67–72, 82–83, Arg88, Lys89, and Gln111 contribute to the FMN site; these read RIVLLK and YT. Tyr129, Arg133, and Ser137 together coordinate substrate. Residues 146-147 and Trp191 contribute to the FMN site; that span reads QS. 197–199 lines the substrate pocket; sequence RLH. Arg201 is a binding site for FMN.

It belongs to the pyridoxamine 5'-phosphate oxidase family. Homodimer. FMN serves as cofactor.

The enzyme catalyses pyridoxamine 5'-phosphate + O2 + H2O = pyridoxal 5'-phosphate + H2O2 + NH4(+). It carries out the reaction pyridoxine 5'-phosphate + O2 = pyridoxal 5'-phosphate + H2O2. It participates in cofactor metabolism; pyridoxal 5'-phosphate salvage; pyridoxal 5'-phosphate from pyridoxamine 5'-phosphate: step 1/1. Its pathway is cofactor metabolism; pyridoxal 5'-phosphate salvage; pyridoxal 5'-phosphate from pyridoxine 5'-phosphate: step 1/1. In terms of biological role, catalyzes the oxidation of either pyridoxine 5'-phosphate (PNP) or pyridoxamine 5'-phosphate (PMP) into pyridoxal 5'-phosphate (PLP). This chain is Pyridoxine/pyridoxamine 5'-phosphate oxidase, found in Escherichia coli O157:H7.